Reading from the N-terminus, the 116-residue chain is Nucleoid-associated protein A9601_00191 (116 aa).

It belongs to the YbaB/EbfC family. Homodimer.

The protein localises to the cytoplasm. It localises to the nucleoid. Binds to DNA and alters its conformation. May be involved in regulation of gene expression, nucleoid organization and DNA protection. The protein is Nucleoid-associated protein A9601_00191 of Prochlorococcus marinus (strain AS9601).